A 336-amino-acid polypeptide reads, in one-letter code: UDP-3-O-acylglucosamine N-acyltransferase (336 aa).

The active-site Proton acceptor is H233.

Belongs to the transferase hexapeptide repeat family. LpxD subfamily. As to quaternary structure, homotrimer.

The enzyme catalyses a UDP-3-O-[(3R)-3-hydroxyacyl]-alpha-D-glucosamine + a (3R)-hydroxyacyl-[ACP] = a UDP-2-N,3-O-bis[(3R)-3-hydroxyacyl]-alpha-D-glucosamine + holo-[ACP] + H(+). It functions in the pathway bacterial outer membrane biogenesis; LPS lipid A biosynthesis. In terms of biological role, catalyzes the N-acylation of UDP-3-O-acylglucosamine using 3-hydroxyacyl-ACP as the acyl donor. Is involved in the biosynthesis of lipid A, a phosphorylated glycolipid that anchors the lipopolysaccharide to the outer membrane of the cell. The sequence is that of UDP-3-O-acylglucosamine N-acyltransferase from Helicobacter pylori (strain J99 / ATCC 700824) (Campylobacter pylori J99).